We begin with the raw amino-acid sequence, 212 residues long: Endoplasmic reticulum vesicle protein 25 (212 aa).

Positions 1–21 (MKSFAACVLLLCALFFEQVFA) are cleaved as a signal peptide. Residues 22 to 181 (VRFDIPASTK…TNESTNRRVR (160 aa)) lie on the Lumenal side of the membrane. The GOLD domain maps to 34–122 (QVCIRDFVSE…SRSIELDIES (89 aa)). A helical transmembrane segment spans residues 182 to 202 (NFSIAVIVVLVALGAWQVNYM). At 203–212 (KNFFRAKHII) the chain is on the cytoplasmic side.

Belongs to the EMP24/GP25L family.

It is found in the endoplasmic reticulum membrane. The protein resides in the golgi apparatus membrane. Its function is as follows. Constituent of COPII-coated endoplasmic reticulum-derived transport vesicles. Required for efficient transport of a subset of secretory proteins to the Golgi. Facilitates retrograde transport from the Golgi to the endoplasmic reticulum. The polypeptide is Endoplasmic reticulum vesicle protein 25 (ERV25) (Kluyveromyces lactis (strain ATCC 8585 / CBS 2359 / DSM 70799 / NBRC 1267 / NRRL Y-1140 / WM37) (Yeast)).